The sequence spans 202 residues: Large ribosomal subunit protein bL25 (202 aa).

The protein belongs to the bacterial ribosomal protein bL25 family. CTC subfamily. Part of the 50S ribosomal subunit; part of the 5S rRNA/L5/L18/L25 subcomplex. Contacts the 5S rRNA. Binds to the 5S rRNA independently of L5 and L18.

Its function is as follows. This is one of the proteins that binds to the 5S RNA in the ribosome where it forms part of the central protuberance. This Burkholderia ambifaria (strain MC40-6) protein is Large ribosomal subunit protein bL25.